The chain runs to 366 residues: MGKGGNSEDAVSGKEHGEENMAAWLLGIKTLKIQPYILPSLGPYDVKVRIKAVGICGSDVHHFKTMRCANFIVKKPMVIGHECAGIIEEVGSEVKNLVAGDRVALEPGISCNRCSLCRNGQYNLCREMKFFGSPPTNGSLANQVVHPSNLCFKLPDNVSLEEGAMCEPLSVGIHACRRANVGPETNVLIMGSGPIGLVTMLAARAFGAPRIVLVDVDDQRLAIAKDLGADDIIRVSTNIQDLDEEVAKIQSTMVTGVDVSFDCVGFNKTMSTALNATRAGGKVCLVGLAQSEMTVPLTPAAAREVDIVGIFRYRNTWPLCLEFLRSGKIDVKPLITHRFTFSQKDVEEAFETSARGGNAIKVMFNL.

Zn(2+) is bound by residues Cys-56, His-81, Cys-111, Cys-114, Cys-117, Cys-125, and Glu-167.

This sequence belongs to the zinc-containing alcohol dehydrogenase family. Zn(2+) serves as cofactor.

The catalysed reaction is L-idonate + NAD(+) = 5-dehydro-D-gluconate + NADH + H(+). Its pathway is carbohydrate acid metabolism; L-idonate degradation. Involved in the catabolism of ascorbate to tartrate. The enzyme has no activity with NADP(+). This chain is L-idonate 5-dehydrogenase, found in Vitis vinifera (Grape).